The sequence spans 202 residues: Imidazoleglycerol-phosphate dehydratase (202 aa).

This sequence belongs to the imidazoleglycerol-phosphate dehydratase family. In terms of assembly, homotrimer.

It carries out the reaction D-erythro-1-(imidazol-4-yl)glycerol 3-phosphate = 3-(imidazol-4-yl)-2-oxopropyl phosphate + H2O. It functions in the pathway amino-acid biosynthesis; L-histidine biosynthesis; L-histidine from 5-phospho-alpha-D-ribose 1-diphosphate: step 6/9. This is Imidazoleglycerol-phosphate dehydratase (HIS3) from Cryptococcus neoformans var. neoformans serotype D (strain B-3501A) (Filobasidiella neoformans).